We begin with the raw amino-acid sequence, 167 residues long: Inclusion membrane protein G (167 aa).

2 consecutive transmembrane segments (helical) span residues 37–57 (LSLF…AVLF) and 63–83 (VLPY…AVIV). 2 disordered regions span residues 97–136 (KRSP…STFG) and 148–167 (VSGA…SHSF). Residues 122 to 134 (ESASPQASPTSST) show a composition bias toward low complexity. Positions 161-166 (RSRSHS) match the Phosphorylation-dependent binding motif motif. A Phosphoserine modification is found at serine 166.

Phosphorylated by chlamydial kinase Pnk1.

It localises to the secreted. It is found in the host vacuole. The protein resides in the host pathogen-containing vacuole. The protein localises to the host pathogen-containing vacuole membrane. In terms of biological role, inclusion membrane protein probably involved in early modification events of the chlamydial inclusion. Binds to the host cell 14-3-3 beta (YWHAB); phosphorylation of Ser-166 is probably required. This Chlamydia trachomatis serovar D (strain ATCC VR-885 / DSM 19411 / UW-3/Cx) protein is Inclusion membrane protein G (incG).